A 313-amino-acid polypeptide reads, in one-letter code: Olfactory receptor 6E1 (313 aa).

N-linked (GlcNAc...) asparagine glycosylation occurs at asparagine 3. 7 consecutive transmembrane segments (helical) span residues 25–45, 64–84, 96–116, 142–162, 192–212, 238–258, and 271–291; these read IFLG…LIIF, FAML…TNII, FLQA…LAVM, LVFC…SIVF, LVEF…LAVT, TCSS…FMYV, and KVVA…IYTL. Cysteines 95 and 177 form a disulfide.

The protein belongs to the G-protein coupled receptor 1 family.

Its subcellular location is the cell membrane. Functionally, odorant receptor. Activated by (-)-citronellal and to a lesser extent by (+)-citronellal. Not activated by carvone or limonene. This is Olfactory receptor 6E1 from Mus musculus (Mouse).